A 384-amino-acid polypeptide reads, in one-letter code: Histidinol-phosphate aminotransferase 2 (384 aa).

Position 236 is an N6-(pyridoxal phosphate)lysine (Lys236).

It belongs to the class-II pyridoxal-phosphate-dependent aminotransferase family. Histidinol-phosphate aminotransferase subfamily. In terms of assembly, homodimer. It depends on pyridoxal 5'-phosphate as a cofactor.

The catalysed reaction is L-histidinol phosphate + 2-oxoglutarate = 3-(imidazol-4-yl)-2-oxopropyl phosphate + L-glutamate. It participates in amino-acid biosynthesis; L-histidine biosynthesis; L-histidine from 5-phospho-alpha-D-ribose 1-diphosphate: step 7/9. This Nostoc sp. (strain PCC 7120 / SAG 25.82 / UTEX 2576) protein is Histidinol-phosphate aminotransferase 2 (hisC2).